The following is a 608-amino-acid chain: Elongation factor 4 (608 aa).

The tr-type G domain occupies 11–193 (DHIRNFSIVA…AIVNRLPPPK (183 aa)). Residues 23–28 (DHGKST) and 140–143 (NKID) each bind GTP.

It belongs to the TRAFAC class translation factor GTPase superfamily. Classic translation factor GTPase family. LepA subfamily.

Its subcellular location is the cell inner membrane. It carries out the reaction GTP + H2O = GDP + phosphate + H(+). Required for accurate and efficient protein synthesis under certain stress conditions. May act as a fidelity factor of the translation reaction, by catalyzing a one-codon backward translocation of tRNAs on improperly translocated ribosomes. Back-translocation proceeds from a post-translocation (POST) complex to a pre-translocation (PRE) complex, thus giving elongation factor G a second chance to translocate the tRNAs correctly. Binds to ribosomes in a GTP-dependent manner. This Agrobacterium fabrum (strain C58 / ATCC 33970) (Agrobacterium tumefaciens (strain C58)) protein is Elongation factor 4.